The chain runs to 600 residues: NADH-quinone oxidoreductase subunit C/D (600 aa).

The tract at residues methionine 1 to glutamine 190 is NADH dehydrogenase I subunit C. The NADH dehydrogenase I subunit D stretch occupies residues aspartate 214–arginine 600.

This sequence in the N-terminal section; belongs to the complex I 30 kDa subunit family. The protein in the C-terminal section; belongs to the complex I 49 kDa subunit family. In terms of assembly, NDH-1 is composed of 13 different subunits. Subunits NuoB, CD, E, F, and G constitute the peripheral sector of the complex.

Its subcellular location is the cell inner membrane. It catalyses the reaction a quinone + NADH + 5 H(+)(in) = a quinol + NAD(+) + 4 H(+)(out). Functionally, NDH-1 shuttles electrons from NADH, via FMN and iron-sulfur (Fe-S) centers, to quinones in the respiratory chain. The immediate electron acceptor for the enzyme in this species is believed to be ubiquinone. Couples the redox reaction to proton translocation (for every two electrons transferred, four hydrogen ions are translocated across the cytoplasmic membrane), and thus conserves the redox energy in a proton gradient. This is NADH-quinone oxidoreductase subunit C/D from Escherichia coli O127:H6 (strain E2348/69 / EPEC).